A 78-amino-acid polypeptide reads, in one-letter code: DNA import protein CedA1 (78 aa).

Transmembrane regions (helical) follow at residues 12–32 and 53–73; these read STVT…GWAL and AIIA…ISYI.

In terms of assembly, forms a complex composed of CedA, CedA1 and CedA2.

It is found in the cell membrane. In terms of biological role, part of the Ced system, which is involved in DNA import. The protein is DNA import protein CedA1 of Sulfolobus acidocaldarius (strain ATCC 33909 / DSM 639 / JCM 8929 / NBRC 15157 / NCIMB 11770).